Reading from the N-terminus, the 751-residue chain is Dendritic arbor reduction protein 1 (751 aa).

Low complexity predominate over residues 57–89; sequence NNNNTSSNNNHSSNSSSNNSNGSQTPNGNNNSS. Disordered stretches follow at residues 57–167, 248–275, 304–351, 374–410, 458–578, and 594–639; these read NNNN…PNSN, LMLS…ATSQ, TEKQ…QQHL, LQQQ…SSYQ, SATA…AATG, and SAIQ…AAHI. Basic residues predominate over residues 95 to 125; sequence HQHHQFHHHLHHHHSHQHHHQHHHLHQHHSH. The span at 153-167 shows a compositional bias: polar residues; that stretch reads AQQQQLQPAGSPNSN. Composition is skewed to low complexity over residues 251 to 267, 309 to 351, and 374 to 393; these read SSSG…SSSN, RQQQ…QQHL, and LQQQ…SSSS. The span at 400–410 shows a compositional bias: polar residues; sequence GDNSGNTSSYQ. Low complexity-rich tracts occupy residues 458 to 513, 527 to 548, and 594 to 610; these read SATA…SSAS, DPGS…QRRT, and SAIQ…QVPQ. 3 C2H2-type zinc fingers span residues 664 to 688, 694 to 718, and 724 to 746; these read HHCD…QRIH, YTCQ…YRKH, and FKCI…MKRH.

This sequence belongs to the krueppel C2H2-type zinc-finger protein family. As to expression, highly enriched in the peripheral nervous system but is absent from the central nervous system. Expressed in neurons with more than one dendrite including da neurons, bd neurons and the dmd1 neuron but undetectable in neurons with single dendrites such as external sensory organ neurons and chodonotal neurons.

The protein localises to the nucleus. Functionally, transcriptional regulator which promotes dendrite growth by suppressing, either directly or indirectly, the expression of the microtubule-severing protein spas. Determines multipolar neuron morphology in postmitotic neurons by positively regulating the expression of genes involved in nuclear positioning including several dynein genes and the nuclear migration protein nudC. In Drosophila melanogaster (Fruit fly), this protein is Dendritic arbor reduction protein 1.